The chain runs to 366 residues: Protein-glutamate methylesterase/protein-glutamine glutaminase of group 2 operon (366 aa).

In terms of domain architecture, Response regulatory spans R19–D136. D70 is modified (4-aspartylphosphate). Residues P162 to D356 enclose the CheB-type methylesterase domain. Catalysis depends on residues S175, H201, and D298.

Belongs to the CheB family. Post-translationally, phosphorylated by CheA. Phosphorylation of the N-terminal regulatory domain activates the methylesterase activity.

The protein localises to the cytoplasm. It catalyses the reaction [protein]-L-glutamate 5-O-methyl ester + H2O = L-glutamyl-[protein] + methanol + H(+). The catalysed reaction is L-glutaminyl-[protein] + H2O = L-glutamyl-[protein] + NH4(+). In terms of biological role, involved in chemotaxis. Part of a chemotaxis signal transduction system that modulates chemotaxis in response to various stimuli. Catalyzes the demethylation of specific methylglutamate residues introduced into the chemoreceptors (methyl-accepting chemotaxis proteins or MCP) by CheR. Also mediates the irreversible deamidation of specific glutamine residues to glutamic acid. The protein is Protein-glutamate methylesterase/protein-glutamine glutaminase of group 2 operon of Cereibacter sphaeroides (Rhodobacter sphaeroides).